The sequence spans 184 residues: dCTP deaminase (184 aa).

DCTP is bound at residue 107 to 112; it reads KSTYAR. The active-site Proton donor/acceptor is Glu133. The dCTP site is built by Gln152, Tyr166, and Gln176.

It belongs to the dCTP deaminase family. As to quaternary structure, homotrimer.

It catalyses the reaction dCTP + H2O + H(+) = dUTP + NH4(+). The protein operates within pyrimidine metabolism; dUMP biosynthesis; dUMP from dCTP (dUTP route): step 1/2. Its function is as follows. Catalyzes the deamination of dCTP to dUTP. The protein is dCTP deaminase of Herpetosiphon aurantiacus (strain ATCC 23779 / DSM 785 / 114-95).